Here is a 636-residue protein sequence, read N- to C-terminus: Chaperone protein DnaK (636 aa).

Threonine 203 is subject to Phosphothreonine; by autocatalysis. Positions 602 to 636 (VYGKQQEGAPAQEEPSAEGKKADDEGTVEGEFREV) are disordered. The span at 618–636 (AEGKKADDEGTVEGEFREV) shows a compositional bias: basic and acidic residues.

The protein belongs to the heat shock protein 70 family.

In terms of biological role, acts as a chaperone. This chain is Chaperone protein DnaK, found in Dehalococcoides mccartyi (strain CBDB1).